We begin with the raw amino-acid sequence, 572 residues long: Methionine--tRNA ligase (572 aa).

Positions 11–21 (PYINGIKHLGN) match the 'HIGH' region motif. 4 residues coordinate Zn(2+): Cys143, Cys146, Cys156, and Cys159. The 'KMSKS' region motif lies at 346-350 (QFSTS). Thr349 provides a ligand contact to ATP.

Belongs to the class-I aminoacyl-tRNA synthetase family. MetG type 1 subfamily. As to quaternary structure, monomer. It depends on Zn(2+) as a cofactor.

It is found in the cytoplasm. The catalysed reaction is tRNA(Met) + L-methionine + ATP = L-methionyl-tRNA(Met) + AMP + diphosphate. Its function is as follows. Is required not only for elongation of protein synthesis but also for the initiation of all mRNA translation through initiator tRNA(fMet) aminoacylation. The polypeptide is Methionine--tRNA ligase (Paracoccus denitrificans (strain Pd 1222)).